A 657-amino-acid chain; its full sequence is Probable alpha-galactosidase D (657 aa).

The signal sequence occupies residues 1–16 (MLPKIFYLSLLPAALG). 2 N-linked (GlcNAc...) asparagine glycosylation sites follow: asparagine 47 and asparagine 91. The cysteines at positions 124 and 157 are disulfide-linked. Residue aspartate 155 is the Nucleophile of the active site. N-linked (GlcNAc...) asparagine glycans are attached at residues asparagine 182 and asparagine 191. 200-204 (EWGID) is a binding site for substrate. Aspartate 222 functions as the Proton donor in the catalytic mechanism. Residues asparagine 291, asparagine 438, asparagine 460, asparagine 505, asparagine 539, asparagine 543, and asparagine 582 are each glycosylated (N-linked (GlcNAc...) asparagine).

The protein belongs to the glycosyl hydrolase 27 family.

It is found in the secreted. The enzyme catalyses Hydrolysis of terminal, non-reducing alpha-D-galactose residues in alpha-D-galactosides, including galactose oligosaccharides, galactomannans and galactolipids.. In terms of biological role, hydrolyzes a variety of simple alpha-D-galactoside as well as more complex molecules such as oligosaccharides and polysaccharides. This chain is Probable alpha-galactosidase D (aglD), found in Aspergillus oryzae (strain ATCC 42149 / RIB 40) (Yellow koji mold).